Consider the following 491-residue polypeptide: PE-PGRS family protein PE_PGRS26 (491 aa).

In terms of domain architecture, PE spans 1-93 (MSNVMVVPGM…VGSYAAAEAA (93 aa)). Composition is skewed to gly residues over residues 207–221 (NGGT…GGGL) and 229–238 (GGNGGGGDAG). Disordered regions lie at residues 207–238 (NGGT…GDAG), 255–275 (DGGA…ARGG), and 444–491 (AGGN…GKHG). The span at 444–485 (AGGNGGDGGPSQGGGNPGFGGDGGTGGPGGVGVPDGIGGANG) shows a compositional bias: gly residues.

It belongs to the mycobacterial PE family. PGRS subfamily.

The protein localises to the cell surface. This Mycobacterium tuberculosis (strain ATCC 25618 / H37Rv) protein is PE-PGRS family protein PE_PGRS26.